The chain runs to 222 residues: UPF0316 protein Mboo_0791 (222 aa).

A run of 3 helical transmembrane segments spans residues 25–45, 67–87, and 93–113; these read FFLF…IFLA, LAPV…VGVL, and IAYF…GLVI.

It belongs to the UPF0316 family.

It is found in the cell membrane. The sequence is that of UPF0316 protein Mboo_0791 from Methanoregula boonei (strain DSM 21154 / JCM 14090 / 6A8).